A 290-amino-acid chain; its full sequence is 33 kDa chaperonin (290 aa).

Disulfide bonds link Cys-234–Cys-236 and Cys-267–Cys-270.

Belongs to the HSP33 family. Under oxidizing conditions two disulfide bonds are formed involving the reactive cysteines. Under reducing conditions zinc is bound to the reactive cysteines and the protein is inactive.

The protein localises to the cytoplasm. In terms of biological role, redox regulated molecular chaperone. Protects both thermally unfolding and oxidatively damaged proteins from irreversible aggregation. Plays an important role in the bacterial defense system toward oxidative stress. This is 33 kDa chaperonin from Colwellia psychrerythraea (strain 34H / ATCC BAA-681) (Vibrio psychroerythus).